A 614-amino-acid chain; its full sequence is ATP-dependent zinc metalloprotease FtsH (614 aa).

Topologically, residues 1 to 5 (MLPIR) are cytoplasmic. A helical transmembrane segment spans residues 6-26 (WFLALLAVFLAVAGLDLWFSQ). At 27 to 127 (TGARPSSATG…AVSARERTAS (101 aa)) the chain is on the periplasmic side. A helical membrane pass occupies residues 128–148 (IVHAIVHPLGLITLIVGILFV). The Cytoplasmic portion of the chain corresponds to 149–614 (VQRYAGRFTA…AQHPPSALAG (466 aa)). 214 to 221 (GPPGTGKT) is a binding site for ATP. Histidine 436 lines the Zn(2+) pocket. Glutamate 437 is a catalytic residue. Zn(2+) is bound by residues histidine 440 and aspartate 513.

The protein in the central section; belongs to the AAA ATPase family. In the C-terminal section; belongs to the peptidase M41 family. Homohexamer. It depends on Zn(2+) as a cofactor.

Its subcellular location is the cell inner membrane. Acts as a processive, ATP-dependent zinc metallopeptidase for both cytoplasmic and membrane proteins. Plays a role in the quality control of integral membrane proteins. In Opitutus terrae (strain DSM 11246 / JCM 15787 / PB90-1), this protein is ATP-dependent zinc metalloprotease FtsH.